A 593-amino-acid chain; its full sequence is MLRTSVLRLLGRTGASRLSLLEDFGPRYYSSGSLSAGDDACDVRAYFTTPIFYVNAAPHIGHLYSALLADALCRHRRLRGPSTAATRFSTGTDEHGLKIQQAAATAGLAPTELCDRVSEQFQQLFQEAGISCTDFIRTTEARHRVAVQHFWGVLKSRGLLYKGVYEGWYCASDECFLPEAKVTQQPGPSGDSFPVSLESGHPVSWTKEENYIFRLSQFRKPLQRWLRGNPQAITPEPFHHVVLQWLDEELPDLSVSRRSSHLHWGIPVPGDDSQTIYVWLDALVNYLTVIGYPNAEFKSWWPATSHIIGKDILKFHAIYWPAFLLGAGMSPPQRICVHSHWTVCGQKMSKSLGNVVDPRTCLNRYTVDGFRYFLLRQGVPNWDCDYYDEKVVKLLNSELADALGGLLNRCTAKRINPSETYPAFCTTCFPSEPGLVGPSVRAQAEDYALVSAVATLPKQVADHYDNFRIYKALEAVSSCVRQTNGFVQRHAPWKLNWESPVDAPWLGTVLHVALECLRVFGTLLQPVTPSLADKLLSRLGVSASERSLGELYFLPRFYGHPCPFEGRRLGPETGLLFPRLDQSRTWLVKAHRT.

The transit peptide at 1–29 (MLRTSVLRLLGRTGASRLSLLEDFGPRYY) directs the protein to the mitochondrion. The 'HIGH' region signature appears at 52–62 (FYVNAAPHIGH). The 'KMSKS' region signature appears at 347-351 (KMSKS). Residue Lys350 participates in ATP binding.

It belongs to the class-I aminoacyl-tRNA synthetase family.

The protein resides in the mitochondrion matrix. It carries out the reaction tRNA(Met) + L-methionine + ATP = L-methionyl-tRNA(Met) + AMP + diphosphate. The protein is Methionine--tRNA ligase, mitochondrial (MARS2) of Homo sapiens (Human).